A 397-amino-acid chain; its full sequence is L-cysteine desulfidase (397 aa).

Cys-23 functions as the Proton acceptor in the catalytic mechanism. Residues Cys-288, Cys-330, and Cys-337 each coordinate [4Fe-4S] cluster.

This sequence belongs to the L-cysteine desulfidase family. In terms of assembly, homotrimer. It depends on [4Fe-4S] cluster as a cofactor.

It carries out the reaction L-cysteine + H2O = hydrogen sulfide + pyruvate + NH4(+) + H(+). In terms of biological role, catalyzes the cleavage of L-cysteine to form 2-aminoprop-2-enoate and sulfide. The former then spontaneously hydrolyzes to pyruvate and NH(3). May be responsible for the production of sulfide required for the biosynthesis of iron-sulfur centers in this archaea. The protein is L-cysteine desulfidase of Methanococcus maripaludis (strain C7 / ATCC BAA-1331).